The chain runs to 511 residues: Cytochrome P450 monooxygenase prhD (511 aa).

The N-linked (GlcNAc...) asparagine glycan is linked to Asn7. Residues Gly10–Leu30 traverse the membrane as a helical segment. Cys444 provides a ligand contact to heme. Asn502 is a glycosylation site (N-linked (GlcNAc...) asparagine).

The protein belongs to the cytochrome P450 family. Heme is required as a cofactor.

Its subcellular location is the membrane. Its pathway is secondary metabolite biosynthesis; terpenoid biosynthesis. Its function is as follows. Cytochrome P450 monooxygenase; part of the gene cluster that mediates the biosynthesis of paraherquonin, a meroterpenoid with a unique, highly congested hexacyclic molecular architecture. The first step of the pathway is the synthesis of 3,5-dimethylorsellinic acid (DMOA) by the polyketide synthase prhL. Synthesis of DMOA is followed by farnesylation by the prenyltransferase prhE, methylesterification by the methyl-transferase prhM, epoxidation of the prenyl chain by the flavin-dependent monooxygenase prhF, and cyclization of the farnesyl moiety by the terpene cyclase prhH, to yield the tetracyclic intermediate, protoaustinoid A. The short chain dehydrogenase prhI then oxidizes the C-3 alcohol group of the terpene cyclase product to transform protoaustinoid A into protoaustinoid B. The FAD-binding monooxygenase prhJ catalyzes the oxidation of protoaustinoid B into preaustinoid A which is further oxidized into preaustinoid A1 by FAD-binding monooxygenase phrK. Finally, prhA leads to berkeleydione via the berkeleyone B intermediate. PrhA is a multifunctional dioxygenase that first desaturates at C5-C6 to form berkeleyone B, followed by rearrangement of the A/B-ring to form the cycloheptadiene moiety in berkeleydione. Berkeleydione serves as the key intermediate for the biosynthesis of paraherquonin as well as many other meroterpenoids. The cytochrome P450 monooxygenases prhB, prhD, and prhN, as well as the isomerase prhC, are probably involved in the late stage of paraherquonin biosynthesis, after the production of berkeleydione. Especially prhC might be a multifunctional enzyme that catalyzes the D-ring expansion via intramolecular methoxy rearrangement, as well as the hydrolysis of the expanded D-ring. The chain is Cytochrome P450 monooxygenase prhD from Penicillium brasilianum.